We begin with the raw amino-acid sequence, 271 residues long: Putative F-box protein L165 (271 aa).

Residues 4 to 49 (ICELFDDVILEIMNLLSDTDKINFMFCCSRFYYFIDLVYYNDIYDY) enclose the F-box domain. The interval 251–271 (NIPKIVPKNTHYRNSSKKYRY) is disordered. Basic residues predominate over residues 260-271 (THYRNSSKKYRY).

In Acanthamoeba polyphaga mimivirus (APMV), this protein is Putative F-box protein L165.